Here is a 280-residue protein sequence, read N- to C-terminus: Chaperone for lacto-N-biosidase (280 aa).

The first 37 residues, Met1 to Ala37, serve as a signal peptide directing secretion.

In terms of assembly, homodimer.

It is found in the secreted. In terms of biological role, chaperone required for active expression of the lacto-N-biosidase LnbX. This is Chaperone for lacto-N-biosidase from Bifidobacterium longum subsp. longum (strain ATCC 15707 / DSM 20219 / JCM 1217 / NCTC 11818 / E194b).